Reading from the N-terminus, the 1642-residue chain is Cortactin-binding protein 2 (1642 aa).

5 disordered regions span residues M1–A27, K203–E222, I366–L433, G446–S471, and R491–D611. A coiled-coil region spans residues R119–K276. The segment covering G385–L394 has biased composition (polar residues). Residues T395–P407 are compositionally biased toward low complexity. Residue R491 is modified to Asymmetric dimethylarginine. Over residues A497–P506 the composition is skewed to pro residues. Polar residues predominate over residues T576 to Q586. ANK repeat units follow at residues G702–Y732, D736–V765, N769–H798, G802–V831, D835–G864, and E904–R934. The segment at E1440–S1469 is disordered. S1513 is subject to Phosphoserine. Positions R1546–K1642 are disordered. Composition is skewed to polar residues over residues G1552–N1563 and K1571–K1588. Positions S1613 to Q1627 are enriched in low complexity.

As to quaternary structure, interacts with CTTN/cortactin SH3 domain. Interacts with STRN, STRN4/zinedin and MOB4/phocein; this interactions mediate the association with the STRIPAK core complex and may regulate dendritic spine distribution of the STRIPAK complex in hippocampal neurons. Activation of glutamate receptors weakens the interaction with STRN and STRN4.

Its subcellular location is the cytoplasm. The protein resides in the cell cortex. It is found in the cell projection. The protein localises to the dendritic spine. Functionally, regulates the dendritic spine distribution of CTTN/cortactin in hippocampal neurons, and thus controls dendritic spinogenesis and dendritic spine maintenance. Associates with the striatin-interacting phosphatase and kinase (STRIPAK) core complex to regulate dendritic spine distribution of the STRIPAK complex in hippocampal neurons. In Muntiacus reevesi (Reeves' muntjac), this protein is Cortactin-binding protein 2 (CTTNBP2).